The sequence spans 448 residues: UDP-N-acetylmuramoylalanine--D-glutamate ligase (448 aa).

116–122 serves as a coordination point for ATP; that stretch reads GSNAKST.

It belongs to the MurCDEF family.

It is found in the cytoplasm. It catalyses the reaction UDP-N-acetyl-alpha-D-muramoyl-L-alanine + D-glutamate + ATP = UDP-N-acetyl-alpha-D-muramoyl-L-alanyl-D-glutamate + ADP + phosphate + H(+). It functions in the pathway cell wall biogenesis; peptidoglycan biosynthesis. Functionally, cell wall formation. Catalyzes the addition of glutamate to the nucleotide precursor UDP-N-acetylmuramoyl-L-alanine (UMA). This is UDP-N-acetylmuramoylalanine--D-glutamate ligase from Pseudomonas syringae pv. tomato (strain ATCC BAA-871 / DC3000).